The chain runs to 808 residues: Leucine-rich repeat-containing protein 41 (808 aa).

An interaction with Elongin BC complex region spans residues 45–54; the sequence is ALFELCGRAV. A phosphoserine mark is found at S155, S276, and S326. Disordered stretches follow at residues 269–289 and 304–404; these read ASRG…SRRP and TRRK…GSGA. Residue T327 is modified to Phosphothreonine. The segment covering 357-379 has biased composition (low complexity); it reads PSSAPTAASSSTSSKRAPASSVS. S369 carries the phosphoserine modification. The segment covering 383–397 has biased composition (basic residues); that stretch reads PLKRFKRATGKKGPR. 7 LRR repeats span residues 483–503, 514–526, 527–551, 609–631, 632–655, 697–724, and 727–748; these read WVSL…IFRL, AGCR…LSDL, FSPL…VLSI, SGSL…FGLV, LQTL…LADC, NSTL…VFSE, and SSSL…LLEF.

Part of an E3 ubiquitin-protein ligase complex with Elongin BC (ELOB and ELOC), RBX1 and CUL5. Component of a probable ECS(LRRC41) complex which contains CUL5, RNF7/RBX2, Elongin BC and LRRC41. Interacts with CUL5, RNF7, ELOB and ELOC.

The protein operates within protein modification; protein ubiquitination. In terms of biological role, probable substrate recognition component of an ECS (Elongin BC-CUL2/5-SOCS-box protein) E3 ubiquitin ligase complex which mediates the ubiquitination and subsequent proteasomal degradation of target proteins. The polypeptide is Leucine-rich repeat-containing protein 41 (Lrrc41) (Rattus norvegicus (Rat)).